The sequence spans 416 residues: Adenylosuccinate synthetase (416 aa).

Residues 12–18 and 40–42 contribute to the GTP site; these read GDEGKGK and GHT. D13 functions as the Proton acceptor in the catalytic mechanism. Residues D13 and G40 each contribute to the Mg(2+) site. IMP is bound by residues 13-16, 38-41, T125, R139, Q220, T235, and R299; these read DEGK and NAGH. The active-site Proton donor is H41. 295–301 serves as a coordination point for substrate; it reads TTTGRPR. GTP-binding positions include R301, 327–329, and 405–407; these read KLD and STS.

This sequence belongs to the adenylosuccinate synthetase family. In terms of assembly, homodimer. Mg(2+) is required as a cofactor.

The protein localises to the cytoplasm. It carries out the reaction IMP + L-aspartate + GTP = N(6)-(1,2-dicarboxyethyl)-AMP + GDP + phosphate + 2 H(+). It functions in the pathway purine metabolism; AMP biosynthesis via de novo pathway; AMP from IMP: step 1/2. Functionally, plays an important role in the de novo pathway of purine nucleotide biosynthesis. Catalyzes the first committed step in the biosynthesis of AMP from IMP. In Nitratiruptor sp. (strain SB155-2), this protein is Adenylosuccinate synthetase.